The chain runs to 398 residues: Dual-specificity RNA methyltransferase RlmN (398 aa).

Glutamate 119 acts as the Proton acceptor in catalysis. One can recognise a Radical SAM core domain in the interval 125-364; sequence DGDRATLCVS…TIVRKTRGDD (240 aa). Cysteines 132 and 369 form a disulfide. [4Fe-4S] cluster-binding residues include cysteine 139, cysteine 143, and cysteine 146. S-adenosyl-L-methionine-binding positions include 193–194, serine 225, 247–249, and asparagine 326; these read GE and SLH. Cysteine 369 acts as the S-methylcysteine intermediate in catalysis.

The protein belongs to the radical SAM superfamily. RlmN family. [4Fe-4S] cluster serves as cofactor.

It localises to the cytoplasm. The catalysed reaction is adenosine(2503) in 23S rRNA + 2 reduced [2Fe-2S]-[ferredoxin] + 2 S-adenosyl-L-methionine = 2-methyladenosine(2503) in 23S rRNA + 5'-deoxyadenosine + L-methionine + 2 oxidized [2Fe-2S]-[ferredoxin] + S-adenosyl-L-homocysteine. It catalyses the reaction adenosine(37) in tRNA + 2 reduced [2Fe-2S]-[ferredoxin] + 2 S-adenosyl-L-methionine = 2-methyladenosine(37) in tRNA + 5'-deoxyadenosine + L-methionine + 2 oxidized [2Fe-2S]-[ferredoxin] + S-adenosyl-L-homocysteine. Its function is as follows. Specifically methylates position 2 of adenine 2503 in 23S rRNA and position 2 of adenine 37 in tRNAs. m2A2503 modification seems to play a crucial role in the proofreading step occurring at the peptidyl transferase center and thus would serve to optimize ribosomal fidelity. In Serratia proteamaculans (strain 568), this protein is Dual-specificity RNA methyltransferase RlmN.